The chain runs to 443 residues: Xaa-Pro dipeptidase (443 aa).

5 residues coordinate Mn(2+): D246, D257, H339, E384, and E423.

Belongs to the peptidase M24B family. Bacterial-type prolidase subfamily. It depends on Mn(2+) as a cofactor.

It catalyses the reaction Xaa-L-Pro dipeptide + H2O = an L-alpha-amino acid + L-proline. In terms of biological role, splits dipeptides with a prolyl residue in the C-terminal position. In Escherichia coli O81 (strain ED1a), this protein is Xaa-Pro dipeptidase.